Reading from the N-terminus, the 198-residue chain is MSKVLILKSSILGGYSQSAVLIDHLASHWETQGAAITVRDLGGKDVLPMVDGEIASGLRGGAELSVRQQEMLALSDTLVAELKANDTIVIAAPMYNFTIPAQLKNWIDFIARAGVTFTYTETGPKGLVEGKRAVLVTTRGGAHKDGPTDHVVPYLKTVLGFIGITNVEVVYAEALNMGPEAHDKGMSEAKHSIDQLKA.

FMN contacts are provided by residues Ser10, 16-18 (SQS), 94-97 (MYNF), and 138-141 (TRGG).

Belongs to the azoreductase type 1 family. Homodimer. It depends on FMN as a cofactor.

The catalysed reaction is 2 a quinone + NADH + H(+) = 2 a 1,4-benzosemiquinone + NAD(+). It catalyses the reaction N,N-dimethyl-1,4-phenylenediamine + anthranilate + 2 NAD(+) = 2-(4-dimethylaminophenyl)diazenylbenzoate + 2 NADH + 2 H(+). In terms of biological role, quinone reductase that provides resistance to thiol-specific stress caused by electrophilic quinones. Functionally, also exhibits azoreductase activity. Catalyzes the reductive cleavage of the azo bond in aromatic azo compounds to the corresponding amines. This is FMN-dependent NADH:quinone oxidoreductase from Shewanella baltica (strain OS185).